The chain runs to 492 residues: Probable malate:quinone oxidoreductase 1 (492 aa).

This sequence belongs to the MQO family. Requires FAD as cofactor.

It carries out the reaction (S)-malate + a quinone = a quinol + oxaloacetate. It functions in the pathway carbohydrate metabolism; tricarboxylic acid cycle; oxaloacetate from (S)-malate (quinone route): step 1/1. This Staphylococcus epidermidis (strain ATCC 35984 / DSM 28319 / BCRC 17069 / CCUG 31568 / BM 3577 / RP62A) protein is Probable malate:quinone oxidoreductase 1.